The sequence spans 183 residues: Large ribosomal subunit protein uL6 (183 aa).

This sequence belongs to the universal ribosomal protein uL6 family. As to quaternary structure, part of the 50S ribosomal subunit.

Functionally, this protein binds to the 23S rRNA, and is important in its secondary structure. It is located near the subunit interface in the base of the L7/L12 stalk, and near the tRNA binding site of the peptidyltransferase center. This Chlamydia trachomatis serovar L2 (strain ATCC VR-902B / DSM 19102 / 434/Bu) protein is Large ribosomal subunit protein uL6.